Reading from the N-terminus, the 1057-residue chain is Probable E3 ubiquitin-protein ligase HERC4 (1057 aa).

7 RCC1 repeats span residues 1–51 (MLCW…FVLD), 52–101 (DGTV…ALND), 102–154 (KGQV…ALSK), 156–207 (SEVF…VLTL), 208–259 (SGAI…ALTK), 261–311 (GGVF…AFVP), and 313–366 (SGRI…CVKR). The region spanning 730 to 1057 (KNIDYKKPLK…IDHNEGFSLI (328 aa)) is the HECT domain. Cysteine 1025 serves as the catalytic Glycyl thioester intermediate.

The protein localises to the cytoplasm. It localises to the cytosol. The enzyme catalyses S-ubiquitinyl-[E2 ubiquitin-conjugating enzyme]-L-cysteine + [acceptor protein]-L-lysine = [E2 ubiquitin-conjugating enzyme]-L-cysteine + N(6)-ubiquitinyl-[acceptor protein]-L-lysine.. The protein operates within protein modification; protein ubiquitination. Its function is as follows. Probable E3 ubiquitin-protein ligase involved in either protein trafficking or in the distribution of cellular structures. Required for spermatozoon maturation and fertility, and for the removal of the cytoplasmic droplet of the spermatozoon. E3 ubiquitin-protein ligases accept ubiquitin from an E2 ubiquitin-conjugating enzyme in the form of a thioester and then directly transfer it to targeted substrates. This is Probable E3 ubiquitin-protein ligase HERC4 (Herc4) from Rattus norvegicus (Rat).